A 208-amino-acid chain; its full sequence is PITH domain-containing protein ZK353.9 (208 aa).

One can recognise a PITH domain in the interval E17–R189.

This sequence belongs to the PITHD1 family.

This chain is PITH domain-containing protein ZK353.9, found in Caenorhabditis elegans.